Consider the following 449-residue polypeptide: Exodeoxyribonuclease 7 large subunit (449 aa).

The protein belongs to the XseA family. Heterooligomer composed of large and small subunits.

The protein localises to the cytoplasm. It carries out the reaction Exonucleolytic cleavage in either 5'- to 3'- or 3'- to 5'-direction to yield nucleoside 5'-phosphates.. In terms of biological role, bidirectionally degrades single-stranded DNA into large acid-insoluble oligonucleotides, which are then degraded further into small acid-soluble oligonucleotides. In Salmonella typhi, this protein is Exodeoxyribonuclease 7 large subunit.